A 310-amino-acid chain; its full sequence is Methionyl-tRNA formyltransferase (310 aa).

110-113 (SLLP) is a binding site for (6S)-5,6,7,8-tetrahydrofolate.

This sequence belongs to the Fmt family.

It catalyses the reaction L-methionyl-tRNA(fMet) + (6R)-10-formyltetrahydrofolate = N-formyl-L-methionyl-tRNA(fMet) + (6S)-5,6,7,8-tetrahydrofolate + H(+). Attaches a formyl group to the free amino group of methionyl-tRNA(fMet). The formyl group appears to play a dual role in the initiator identity of N-formylmethionyl-tRNA by promoting its recognition by IF2 and preventing the misappropriation of this tRNA by the elongation apparatus. The polypeptide is Methionyl-tRNA formyltransferase (Halorhodospira halophila (strain DSM 244 / SL1) (Ectothiorhodospira halophila (strain DSM 244 / SL1))).